Reading from the N-terminus, the 91-residue chain is Probable Fe(2+)-trafficking protein (91 aa).

This sequence belongs to the Fe(2+)-trafficking protein family.

Could be a mediator in iron transactions between iron acquisition and iron-requiring processes, such as synthesis and/or repair of Fe-S clusters in biosynthetic enzymes. This Tolumonas auensis (strain DSM 9187 / NBRC 110442 / TA 4) protein is Probable Fe(2+)-trafficking protein.